The sequence spans 213 residues: Kynurenine formamidase (213 aa).

A substrate-binding site is contributed by tryptophan 18. 3 residues coordinate Zn(2+): histidine 48, histidine 52, and aspartate 54. Histidine 58 (proton donor/acceptor) is an active-site residue. 2 residues coordinate Zn(2+): histidine 160 and glutamate 172.

This sequence belongs to the Cyclase 1 superfamily. KynB family. Homodimer. Zn(2+) serves as cofactor.

It catalyses the reaction N-formyl-L-kynurenine + H2O = L-kynurenine + formate + H(+). It participates in amino-acid degradation; L-tryptophan degradation via kynurenine pathway; L-kynurenine from L-tryptophan: step 2/2. In terms of biological role, catalyzes the hydrolysis of N-formyl-L-kynurenine to L-kynurenine, the second step in the kynurenine pathway of tryptophan degradation. This is Kynurenine formamidase from Burkholderia ambifaria (strain ATCC BAA-244 / DSM 16087 / CCUG 44356 / LMG 19182 / AMMD) (Burkholderia cepacia (strain AMMD)).